The primary structure comprises 281 residues: tRNA uridine(34) hydroxylase (281 aa).

The region spanning 125–222 (AREDVKTIDT…YFLKTKNKDG (98 aa)) is the Rhodanese domain. The active-site Cysteine persulfide intermediate is the Cys-182.

It belongs to the TrhO family.

It catalyses the reaction uridine(34) in tRNA + AH2 + O2 = 5-hydroxyuridine(34) in tRNA + A + H2O. Its function is as follows. Catalyzes oxygen-dependent 5-hydroxyuridine (ho5U) modification at position 34 in tRNAs. In Neorickettsia sennetsu (strain ATCC VR-367 / Miyayama) (Ehrlichia sennetsu), this protein is tRNA uridine(34) hydroxylase.